A 71-amino-acid polypeptide reads, in one-letter code: Brevinin-1E (71 aa).

Positions 1 to 22 (MFTLKKSMLLLFFLGTINLSLC) are cleaved as a signal peptide. A propeptide spanning residues 23–45 (EEERDADEEERRDNPDESEVEVE) is cleaved from the precursor. A disulfide bridge connects residues C65 and C71.

This sequence belongs to the frog skin active peptide (FSAP) family. Brevinin subfamily. As to expression, expressed by the skin glands.

The protein localises to the secreted. Its function is as follows. Shows antibacterial activity against representative Gram-negative and Gram-positive bacterial species, and a very high hemolytic activity. This is Brevinin-1E from Pelophylax lessonae (Pool frog).